The primary structure comprises 432 residues: Peptidase B (432 aa).

Lysine 196 and aspartate 201 together coordinate Mn(2+). Lysine 208 is an active-site residue. The Mn(2+) site is built by aspartate 219, aspartate 278, and glutamate 280. Residue arginine 282 is part of the active site.

Belongs to the peptidase M17 family. In terms of assembly, homohexamer. Mn(2+) serves as cofactor.

The protein localises to the cytoplasm. The enzyme catalyses Release of an N-terminal amino acid, Xaa, from a peptide or arylamide. Xaa is preferably Glu or Asp but may be other amino acids, including Leu, Met, His, Cys and Gln.. In terms of biological role, probably plays an important role in intracellular peptide degradation. This Yersinia pseudotuberculosis serotype IB (strain PB1/+) protein is Peptidase B.